The following is a 312-amino-acid chain: Isethionate sulfite-lyase activating enzyme (312 aa).

The region spanning 22-309 is the Radical SAM core domain; it reads HDGPGIRTIV…VDETRGAVTE (288 aa). 11 residues coordinate [4Fe-4S] cluster: C36, C40, C43, C62, C65, C68, C72, C92, C95, C100, and C104. 42-44 is a binding site for S-adenosyl-L-methionine; that stretch reads WCS. 2 consecutive 4Fe-4S ferredoxin-type domains span residues 53–82 and 83–115; these read PQVAYNKGRCIGCHRCIKACEHDAITVNED and GTLSLDRGKCDVCKTLDCAHACPAQGMIIYGEN. S-adenosyl-L-methionine is bound by residues G144, 193 to 195, and H267; that span reads DVK.

Belongs to the organic radical-activating enzymes family. In terms of assembly, monomer. It depends on [4Fe-4S] cluster as a cofactor.

The enzyme catalyses glycyl-[protein] + reduced [flavodoxin] + S-adenosyl-L-methionine = glycin-2-yl radical-[protein] + semiquinone [flavodoxin] + 5'-deoxyadenosine + L-methionine + H(+). The protein operates within organosulfur degradation; alkanesulfonate degradation. Involved in an anaerobic respiration pathway that converts the sulfonate taurine (2-aminoethanesulfonate) to ammonia, acetate and sulfide. Catalyzes activation of the isethionate sulfite-lyase IslA under anaerobic conditions by generation of an organic free radical on a glycine residue, via a homolytic cleavage of S-adenosyl-L-methionine (SAM). This is Isethionate sulfite-lyase activating enzyme from Bilophila wadsworthia (strain 3_1_6).